The chain runs to 378 residues: Erythronate-4-phosphate dehydrogenase (378 aa).

Substrate contacts are provided by S45 and T66. D146 and T175 together coordinate NAD(+). R208 is a catalytic residue. D232 contacts NAD(+). E237 is a catalytic residue. The active-site Proton donor is H254. G257 is a binding site for NAD(+). Substrate is bound at residue Y258.

Belongs to the D-isomer specific 2-hydroxyacid dehydrogenase family. PdxB subfamily. Homodimer.

The protein resides in the cytoplasm. It carries out the reaction 4-phospho-D-erythronate + NAD(+) = (R)-3-hydroxy-2-oxo-4-phosphooxybutanoate + NADH + H(+). Its pathway is cofactor biosynthesis; pyridoxine 5'-phosphate biosynthesis; pyridoxine 5'-phosphate from D-erythrose 4-phosphate: step 2/5. Catalyzes the oxidation of erythronate-4-phosphate to 3-hydroxy-2-oxo-4-phosphonooxybutanoate. This Salmonella arizonae (strain ATCC BAA-731 / CDC346-86 / RSK2980) protein is Erythronate-4-phosphate dehydrogenase.